The primary structure comprises 624 residues: DNA mismatch repair protein MutL (624 aa).

The disordered stretch occupies residues 416–436; sequence LTPSVDQPDTGDGENPVAPEK.

Belongs to the DNA mismatch repair MutL/HexB family.

This protein is involved in the repair of mismatches in DNA. It is required for dam-dependent methyl-directed DNA mismatch repair. May act as a 'molecular matchmaker', a protein that promotes the formation of a stable complex between two or more DNA-binding proteins in an ATP-dependent manner without itself being part of a final effector complex. The polypeptide is DNA mismatch repair protein MutL (Chlorobaculum tepidum (strain ATCC 49652 / DSM 12025 / NBRC 103806 / TLS) (Chlorobium tepidum)).